We begin with the raw amino-acid sequence, 391 residues long: Ferrochelatase (391 aa).

His196 and Glu281 together coordinate Fe cation.

The protein belongs to the ferrochelatase family.

Its subcellular location is the cytoplasm. It catalyses the reaction heme b + 2 H(+) = protoporphyrin IX + Fe(2+). It participates in porphyrin-containing compound metabolism; protoheme biosynthesis; protoheme from protoporphyrin-IX: step 1/1. Catalyzes the ferrous insertion into protoporphyrin IX. The chain is Ferrochelatase from Synechococcus sp. (strain CC9605).